An 803-amino-acid polypeptide reads, in one-letter code: Integrin beta-1 (803 aa).

The signal sequence occupies residues 1 to 24; the sequence is MAETNLTLLTWAGILCCLIWSGSA. Blocked amino end (Gln) is present on Q25. The Extracellular segment spans residues 25–733; the sequence is QQGGSDCIKA…ETPECPSGPD (709 aa). One can recognise a PSI domain in the interval 30–80; sequence DCIKANAKSCGECIQAGPNCGWCKKTDFLQEGEPTSARCDDLAALKSKGCP. 22 disulfides stabilise this stretch: C31–C49, C39–C469, C42–C68, C52–C79, C211–C217, C265–C305, C405–C419, C439–C467, C471–C491, C482–C494, C496–C505, C507–C538, C521–C536, C530–C541, C543–C558, C560–C581, C565–C579, C573–C584, C586–C595, C597–C620, C604–C618, and C612–C623. A VWFA domain is found at 144–382; it reads DYPIDLYYLM…QLIIDAYNSL (239 aa). Positions 156 and 158 each coordinate Mg(2+). Ca(2+) contacts are provided by S158, D161, D162, and E193. Residues 211–217 are CX3CL1-binding; it reads CTGDQNC. N216 is a glycosylation site (N-linked (GlcNAc...) asparagine). Ca(2+) is bound by residues N248, D250, P252, and E253. A Mg(2+)-binding site is contributed by E253. N273 carries N-linked (GlcNAc...) asparagine glycosylation. The interval 299–318 is CX3CL1-binding; it reads LPNDGKCHLENNMYTMSHYY. Residues N367, N410, N421, N433, N445, and N486 are each glycosylated (N-linked (GlcNAc...) asparagine). The interval 387–470 is interaction with TMEM182; it reads ILENSKLPKE…IHLQFICDCL (84 aa). I-EGF domains follow at residues 471–506, 507–559, 560–596, and 597–636; these read CQSE…RLCE, CSTD…KYCE, CDNF…SACD, and CSLD…PTCE. N-linked (GlcNAc...) asparagine glycosylation is present at N525. An N-linked (GlcNAc...) asparagine glycan is attached at N589. N-linked (GlcNAc...) asparagine glycosylation is present at N624. 6 disulfides stabilise this stretch: C625–C635, C638–C641, C645–C696, C651–C670, C654–C666, and C704–C728. N674 carries N-linked (GlcNAc...) asparagine glycosylation. The helical transmembrane segment at 734-756 threads the bilayer; sequence IIPIVAGVVAGIVLIGLALLLIW. The Cytoplasmic portion of the chain corresponds to 757–803; the sequence is KLLMIIHDRREFAKFEKEKMNAKWDTGENPIYKSAVTTVVNPKYEGK. Position 788 is a phosphotyrosine; by Tyr-kinases (Y788).

The protein belongs to the integrin beta chain family. Heterodimer of an alpha and a beta subunit. Beta-1 associates with either alpha-1, alpha-2, alpha-3, alpha-4, alpha-5, alpha-6, alpha-7, alpha-8, alpha-9, alpha-10, alpha-11 or alpha-V. Interacts with TMEM182 and LAMB1. As to expression, expressed on surface of embryonic fibroblasts (at protein level).

It is found in the cell membrane. The protein resides in the cell projection. The protein localises to the invadopodium membrane. It localises to the ruffle membrane. Its subcellular location is the melanosome. It is found in the lamellipodium. The protein resides in the ruffle. The protein localises to the cell junction. It localises to the focal adhesion. Its function is as follows. Integrins alpha-1/beta-1, alpha-2/beta-1, alpha-10/beta-1 and alpha-11/beta-1 are receptors for collagen. Integrins alpha-1/beta-1 and alpha-2/beta-1 recognize the proline-hydroxylated sequence G-F-P-G-E-R in collagen. Integrins alpha-2/beta-1, alpha-3/beta-1, alpha-4/beta-1, alpha-5/beta-1, alpha-8/beta-1, alpha-10/beta-1, alpha-11/beta-1 and alpha-V/beta-1 are receptors for fibronectin. Alpha-4/beta-1 recognizes one or more domains within the alternatively spliced CS-1 and CS-5 regions of fibronectin. Integrin alpha-5/beta-1 is a receptor for fibrinogen. Integrin alpha-1/beta-1, alpha-2/beta-1, alpha-6/beta-1 and alpha-7/beta-1 are receptors for lamimin. Integrin alpha-6/beta-1 (ITGA6:ITGB1) is present in oocytes and is involved in sperm-egg fusion. Integrin alpha-4/beta-1 is a receptor for VCAM1 and recognizes the sequence Q-I-D-S in VCAM1. Integrin alpha-9/beta-1 is a receptor for VCAM1, cytotactin and osteopontin. It recognizes the sequence A-E-I-D-G-I-E-L in cytotactin. Integrin alpha-3/beta-1 is a receptor for epiligrin, thrombospondin and CSPG4. Integrin alpha-3/beta-1 provides a docking site for FAP (seprase) at invadopodia plasma membranes in a collagen-dependent manner and hence may participate in the adhesion, formation of invadopodia and matrix degradation processes, promoting cell invasion. Alpha-3/beta-1 may mediate with LGALS3 the stimulation by CSPG4 of endothelial cells migration. Integrin alpha-V/beta-1 is a receptor for vitronectin. Beta-1 integrins recognize the sequence R-G-D in a wide array of ligands. When associated with alpha-7/beta-1 integrin, regulates cell adhesion and laminin matrix deposition. Involved in promoting endothelial cell motility and angiogenesis. Involved in osteoblast compaction through the fibronectin fibrillogenesis cell-mediated matrix assembly process and the formation of mineralized bone nodules. May be involved in up-regulation of the activity of kinases such as PKC via binding to KRT1. Together with KRT1 and RACK1, serves as a platform for SRC activation or inactivation. ITGA4:ITGB1 binds to fractalkine (CX3CL1) and may act as its coreceptor in CX3CR1-dependent fractalkine signaling. ITGA4:ITGB1 and ITGA5:ITGB1 bind to PLA2G2A via a site (site 2) which is distinct from the classical ligand-binding site (site 1) and this induces integrin conformational changes and enhanced ligand binding to site 1. ITGA5:ITGB1 acts as a receptor for fibrillin-1 (FBN1) and mediates R-G-D-dependent cell adhesion to FBN1. ITGA5:ITGB1 acts as a receptor for fibronectin FN1 and mediates R-G-D-dependent cell adhesion to FN1. ITGA5:ITGB1 is a receptor for IL1B and binding is essential for IL1B signaling. ITGA5:ITGB3 is a receptor for soluble CD40LG and is required for CD40/CD40LG signaling. Plays an important role in myoblast differentiation and fusion during skeletal myogenesis. In Gallus gallus (Chicken), this protein is Integrin beta-1 (ITGB1).